The chain runs to 663 residues: Ras and EF-hand domain-containing protein (663 aa).

2 consecutive EF-hand domains span residues 1-33 and 35-70; these read MNHAELRRLFAACDGNQSGRVEYEDFTTVCREL and VPADDIRTLFNKFDLDGDGYINFNDFSSSFQEVSEA. Residues D14, N16, S18, R20, D25, D48, D50, D52, Y54, and D59 each coordinate Ca(2+). Positions 122-297 form a coiled coil; that stretch reads ELLLQQFEDL…LKKMVMEFQS (176 aa). Polar residues predominate over residues 324–336; that stretch reads SQENASTKRQLSP. A disordered region spans residues 324–343; the sequence is SQENASTKRQLSPRNEVLPR. Residues 477-482, 580-583, and 615-616 each bind GTP; these read GSGKSS, NKVD, and AK.

It belongs to the small GTPase superfamily. Rab family. As to quaternary structure, homodimer.

Its subcellular location is the cytoplasm. It is found in the perinuclear region. Functionally, binds predominantly GDP, and also GTP. This is Ras and EF-hand domain-containing protein (rasef) from Danio rerio (Zebrafish).